Consider the following 264-residue polypeptide: Phosphonoacetaldehyde hydrolase (264 aa).

The Nucleophile role is filled by Asp9. 2 residues coordinate Mg(2+): Asp9 and Ala11. The active-site Schiff-base intermediate with substrate is the Lys50. Asp183 is a Mg(2+) binding site.

The protein belongs to the HAD-like hydrolase superfamily. PhnX family. Homodimer. Requires Mg(2+) as cofactor.

It catalyses the reaction phosphonoacetaldehyde + H2O = acetaldehyde + phosphate + H(+). Its function is as follows. Involved in phosphonate degradation. The protein is Phosphonoacetaldehyde hydrolase of Bacillus mycoides (strain KBAB4) (Bacillus weihenstephanensis).